We begin with the raw amino-acid sequence, 253 residues long: Uridine phosphorylase (253 aa).

This sequence belongs to the PNP/UDP phosphorylase family. Homohexamer.

It is found in the cytoplasm. It catalyses the reaction uridine + phosphate = alpha-D-ribose 1-phosphate + uracil. It functions in the pathway pyrimidine metabolism; UMP biosynthesis via salvage pathway; uracil from uridine (phosphorylase route): step 1/1. Functionally, catalyzes the reversible phosphorylytic cleavage of uridine to uracil and ribose-1-phosphate. Shows weak activity towards deoxyuridine and thymidine. The produced molecules are then utilized as carbon and energy sources or in the rescue of pyrimidine bases for nucleotide synthesis. The chain is Uridine phosphorylase from Escherichia coli (strain K12).